Consider the following 488-residue polypeptide: UL37 immediate early glycoprotein (488 aa).

The signal sequence occupies residues 1 to 22 (MSPVYVNLLGSVGLLAFWYFSY). Over residues 83–107 (GEESVTEDTEREDTEEEREDEEEEN) the composition is skewed to acidic residues. A disordered region spans residues 83–119 (GEESVTEDTEREDTEEEREDEEEENEARTPEVNPMDA). Asparagine 206, asparagine 210, asparagine 219, asparagine 223, asparagine 242, asparagine 275, asparagine 281, asparagine 294, asparagine 297, asparagine 306, asparagine 333, asparagine 337, asparagine 343, asparagine 384, and asparagine 391 each carry an N-linked (GlcNAc...) asparagine; by host glycan. Residues 439-459 (ICTVAAGSIALLSLFCILLIG) form a helical membrane-spanning segment.

It belongs to the immediate early glycoprotein family. As to quaternary structure, interacts with host BAX. Interacts with host RSAD2/viperin; this interaction results in RSAD2/viperin relocalization from the endoplasmic reticulum to the mitochondria, actin cytoskeleton disruption and enhancement of infection. Interacts with host PEX19; this interaction inhibits the peroxisomal-dependent antiviral signaling. Interacts with host CHCHD6; this interaction rewires mitochondria by engaging the conserved MICOS complex.

It is found in the host membrane. The protein resides in the host endoplasmic reticulum membrane. Its subcellular location is the host Golgi apparatus membrane. The protein localises to the host mitochondrion membrane. It localises to the host peroxisome. In terms of biological role, multifunctional transmembrane protein that plays several key roles in viral replication. Rapidely traffics from the host endoplasmic reticulum to the outer mitochondrial membrane where it acts to inhibit host immune response, block apoptotic signaling, regulate calcium flux, and induce mitochondrial fragmentation. Sequesters proapoptotic BAX at the outer mitochondrial membrane and prevents cytochrome c release and subsequent initiation of the proapoptotic cascade. Also provoques a calcium efflux from host endoplasmic reticulum and F-actin cytoskeleton disruption. Participates in the increase of host mitochondrial biogenesis, thus promoting viral replication by efficient use of newly made mitochondria. Additionally, a subset of vMIA localizes to peroxisomes, causing fragmentation and blocking peroxisomal MAVS signaling. Mechanistically, inhibits host MAVS oligomerization at peroxisomes in a mitochondrial fission factors (MFF)-dependent manner and in mitochondria independently of mitochondrial fission factors. Plays an essential role in the trafficking of host viperin/RSAD2 from the endoplasmic reticulum to the viral assembly compartment via the mitochondria during viral infection as failure of viperin to localize to the mitochondria results in insufficient lipogenesis and thus reduces viral replication. Its function is as follows. May play a role in escape from the host antiviral response. In Homo sapiens (Human), this protein is UL37 immediate early glycoprotein (UL37).